The following is an 82-amino-acid chain: MAKNNSTPQKLVITGIKGYQRFISPLLGSNCRFTPSCSAYATEAINRFGVIKGGWLASKRILRCHPLNDGGEDPVPPIKKSK.

This sequence belongs to the UPF0161 family.

Its subcellular location is the cell inner membrane. In terms of biological role, could be involved in insertion of integral membrane proteins into the membrane. In Colwellia psychrerythraea (strain 34H / ATCC BAA-681) (Vibrio psychroerythus), this protein is Putative membrane protein insertion efficiency factor.